Here is an 844-residue protein sequence, read N- to C-terminus: DNA mismatch repair protein MutS (844 aa).

Residue 610-617 coordinates ATP; that stretch reads GPNMGGKS.

This sequence belongs to the DNA mismatch repair MutS family.

Functionally, this protein is involved in the repair of mismatches in DNA. It is possible that it carries out the mismatch recognition step. This protein has a weak ATPase activity. The chain is DNA mismatch repair protein MutS from Francisella tularensis subsp. novicida (strain U112).